Reading from the N-terminus, the 463-residue chain is Stress-activated protein kinase jnk-1 (463 aa).

Over residues 1-12 the composition is skewed to polar residues; it reads MEERLSTTSSYP. Residues 1 to 23 form a disordered region; it reads MEERLSTTSSYPSHPGRSVEEDH. Residues 119–412 form the Protein kinase domain; sequence YQNLRLIGSG…ISVDDALRHP (294 aa). Residues 126 to 131 and Lys148 contribute to the ATP site; that span reads GSGAQG. Residue Asp244 is the Proton acceptor of the active site. The residue at position 276 (Thr276) is a Phosphothreonine. Positions 276–278 match the TXY motif; it reads TPY. Position 278 is a phosphotyrosine (Tyr278).

It belongs to the protein kinase superfamily. CMGC Ser/Thr protein kinase family. MAP kinase subfamily. In terms of assembly, binds to the scaffolding protein, unc-16. Unc-16 also binds other components of the JNK signaling pathway. Interacts with daf-16. Mg(2+) serves as cofactor. Dually phosphorylated on Thr-276 and Tyr-278, which activates the enzyme. In terms of tissue distribution, expressed in most neurons, including nerve ring, head ganglions, dorsal and ventral nerve cords and tail ganglions. The Thr-276/Tyr-278 phosphorylated form is present in the nerve ring upon heat exposure.

Its subcellular location is the cytoplasm. The protein resides in the perikaryon. It is found in the cell projection. The protein localises to the axon. It catalyses the reaction L-seryl-[protein] + ATP = O-phospho-L-seryl-[protein] + ADP + H(+). The enzyme catalyses L-threonyl-[protein] + ATP = O-phospho-L-threonyl-[protein] + ADP + H(+). Its activity is regulated as follows. Activated by threonine and tyrosine phosphorylation by either of the dual specificity kinases, jkk-1 and mek-1. In terms of biological role, serine/threonine-protein kinase which responds to activation by environmental stress by phosphorylating a number of transcription factors such as daf-16, and thus regulates transcriptional activity. By phosphorylating daf-16, plays a role in daf-16 nuclear translocation in intestinal cells in response to environmental stresses such as heat and oxidative stresses. Downstream of jkk-1, may coordinate locomotion via type-D GABAergic motoneurons and regulates synaptic vesicle transport in conjunction with unc-16. Independently of jkk-1, may regulate some mechanosensory responses, such as response to touch. Independently of jkk-1 and downstream of mek-1, plays a role in resistance to heavy metals, such as Cu(2+) or Cd(2+). Regulates germline cell apoptosis in response to heavy metals such as Cu(2+) and arsenite. Required for dopaminergic CEP neuron degeneration in response to Mn(2+). Required for normal sleep bout quantity and arousal thresholds during the transition from the last larval stage to adulthood in well-fed animals. Downstream of jkk-1 but independently of mek-1, positively regulates lifespan. The sequence is that of Stress-activated protein kinase jnk-1 (jnk-1) from Caenorhabditis elegans.